Here is a 441-residue protein sequence, read N- to C-terminus: Amino-acid acetyltransferase (441 aa).

The region spanning 295 to 434 is the N-acetyltransferase domain; that stretch reads EQVRRATIND…QALYNYQRRS (140 aa).

It belongs to the acetyltransferase family. ArgA subfamily. In terms of assembly, homohexamer.

It localises to the cytoplasm. It catalyses the reaction L-glutamate + acetyl-CoA = N-acetyl-L-glutamate + CoA + H(+). The protein operates within amino-acid biosynthesis; L-arginine biosynthesis; N(2)-acetyl-L-ornithine from L-glutamate: step 1/4. This is Amino-acid acetyltransferase from Pectobacterium atrosepticum (strain SCRI 1043 / ATCC BAA-672) (Erwinia carotovora subsp. atroseptica).